Reading from the N-terminus, the 401-residue chain is LL-diaminopimelate aminotransferase (401 aa).

Substrate-binding residues include Tyr-15 and Gly-42. Pyridoxal 5'-phosphate-binding positions include Tyr-72, 108–109, Tyr-132, Asn-176, Tyr-207, and 235–237; these read AK and SFS. Residues Lys-109, Tyr-132, and Asn-176 each coordinate substrate. At Lys-238 the chain carries N6-(pyridoxal phosphate)lysine. 2 residues coordinate pyridoxal 5'-phosphate: Arg-246 and Asn-281. The substrate site is built by Asn-281 and Arg-377.

Belongs to the class-I pyridoxal-phosphate-dependent aminotransferase family. LL-diaminopimelate aminotransferase subfamily. In terms of assembly, homodimer. Requires pyridoxal 5'-phosphate as cofactor.

It carries out the reaction (2S,6S)-2,6-diaminopimelate + 2-oxoglutarate = (S)-2,3,4,5-tetrahydrodipicolinate + L-glutamate + H2O + H(+). The protein operates within amino-acid biosynthesis; L-lysine biosynthesis via DAP pathway; LL-2,6-diaminopimelate from (S)-tetrahydrodipicolinate (aminotransferase route): step 1/1. Functionally, involved in the synthesis of meso-diaminopimelate (m-DAP or DL-DAP), required for both lysine and peptidoglycan biosynthesis. Catalyzes the direct conversion of tetrahydrodipicolinate to LL-diaminopimelate. The chain is LL-diaminopimelate aminotransferase from Azobacteroides pseudotrichonymphae genomovar. CFP2.